The chain runs to 59 residues: Lantibiotic lacticin 3147 A1 (59 aa).

The propeptide occupies 1–29 (MNKNEIETQPVTWLEEVSDQNFDEDVFGA). Positions 30-31 (CS) form a cross-link, lanthionine (Cys-Ser). A 2,3-didehydrobutyrine mark is found at threonine 32 and threonine 34. Serine 36 is modified (2,3-didehydroalanine (Ser)). The lanthionine (Ser-Cys) cross-link spans 38–48 (SDYWGNNGAWC). 2 cross-links (beta-methyllanthionine (Thr-Cys)) span residues 49 to 54 (TLTHEC) and 51 to 58 (THECMAWC).

Maturation of lantibiotics involves the enzymatic conversion of Thr, and Ser into dehydrated AA and the formation of thioether bonds with cysteine. This is followed by membrane translocation and cleavage of the modified precursor. Post-translationally, it is not established whether the 2,3-didehydrobutyrines are the E- or Z-isomers. In the NMR model they were assumed to be the Z-isomer.

Its subcellular location is the secreted. Lanthionine-containing peptide antibiotic (lantibiotic) active on Gram-positive bacteria. The bactericidal activity of lantibiotics is based on depolarization of energized bacterial cytoplasmic membranes, initiated by the formation of aqueous transmembrane pores. When present individually lacticin 3147 A1 exhibits strong activity towards L.lactis strain AM2, weak activity towards L.lactis strain HP and no activity towards L.lactis strain IFPL359, but when combined with lacticin 3147 A2 it displays strong activity towards all three strains. The sequence is that of Lantibiotic lacticin 3147 A1 from Lactococcus lactis subsp. lactis (Streptococcus lactis).